The chain runs to 314 residues: Acetyl-coenzyme A carboxylase carboxyl transferase subunit alpha (314 aa).

In terms of domain architecture, CoA carboxyltransferase C-terminal spans 32 to 289 (EIDMLEASLE…KSAFVAQLDS (258 aa)).

It belongs to the AccA family. As to quaternary structure, acetyl-CoA carboxylase is a heterohexamer composed of biotin carboxyl carrier protein (AccB), biotin carboxylase (AccC) and two subunits each of ACCase subunit alpha (AccA) and ACCase subunit beta (AccD).

It localises to the cytoplasm. It carries out the reaction N(6)-carboxybiotinyl-L-lysyl-[protein] + acetyl-CoA = N(6)-biotinyl-L-lysyl-[protein] + malonyl-CoA. It functions in the pathway lipid metabolism; malonyl-CoA biosynthesis; malonyl-CoA from acetyl-CoA: step 1/1. Component of the acetyl coenzyme A carboxylase (ACC) complex. First, biotin carboxylase catalyzes the carboxylation of biotin on its carrier protein (BCCP) and then the CO(2) group is transferred by the carboxyltransferase to acetyl-CoA to form malonyl-CoA. In Staphylococcus aureus (strain JH9), this protein is Acetyl-coenzyme A carboxylase carboxyl transferase subunit alpha.